The following is a 184-amino-acid chain: Antigen Sm21.7 (184 aa).

Residues Leu-37–Glu-72 enclose the EF-hand domain. Ca(2+) contacts are provided by Asp-50, Asp-52, Asp-54, Lys-56, and Glu-61.

In Schistosoma mansoni (Blood fluke), this protein is Antigen Sm21.7 (SM21.7).